Reading from the N-terminus, the 363-residue chain is Carbamoyl phosphate synthase small chain (363 aa).

Positions 1–173 (MMKAFLVLDN…SKYIFGTHTG (173 aa)) are CPSase. L-glutamine contacts are provided by Ser46, Gly225, and Gly227. Residues 177-363 (KLAVYDYGVK…YDLVEKTKKG (187 aa)) enclose the Glutamine amidotransferase type-1 domain. Cys253 (nucleophile) is an active-site residue. L-glutamine-binding residues include Leu254, Gln257, Asn295, Gly297, and Phe298. Residues His336 and Glu338 contribute to the active site.

The protein belongs to the CarA family. Composed of two chains; the small (or glutamine) chain promotes the hydrolysis of glutamine to ammonia, which is used by the large (or ammonia) chain to synthesize carbamoyl phosphate. Tetramer of heterodimers (alpha,beta)4.

It catalyses the reaction hydrogencarbonate + L-glutamine + 2 ATP + H2O = carbamoyl phosphate + L-glutamate + 2 ADP + phosphate + 2 H(+). The enzyme catalyses L-glutamine + H2O = L-glutamate + NH4(+). The protein operates within amino-acid biosynthesis; L-arginine biosynthesis; carbamoyl phosphate from bicarbonate: step 1/1. It participates in pyrimidine metabolism; UMP biosynthesis via de novo pathway; (S)-dihydroorotate from bicarbonate: step 1/3. In terms of biological role, small subunit of the glutamine-dependent carbamoyl phosphate synthetase (CPSase). CPSase catalyzes the formation of carbamoyl phosphate from the ammonia moiety of glutamine, carbonate, and phosphate donated by ATP, constituting the first step of 2 biosynthetic pathways, one leading to arginine and/or urea and the other to pyrimidine nucleotides. The small subunit (glutamine amidotransferase) binds and cleaves glutamine to supply the large subunit with the substrate ammonia. In Leptospira interrogans serogroup Icterohaemorrhagiae serovar copenhageni (strain Fiocruz L1-130), this protein is Carbamoyl phosphate synthase small chain.